The chain runs to 169 residues: Holo-[acyl-carrier-protein] synthase (169 aa).

Residues Asp-8 and Glu-50 each coordinate Mg(2+).

It belongs to the P-Pant transferase superfamily. AcpS family. The cofactor is Mg(2+).

The protein resides in the cytoplasm. The catalysed reaction is apo-[ACP] + CoA = holo-[ACP] + adenosine 3',5'-bisphosphate + H(+). Functionally, transfers the 4'-phosphopantetheine moiety from coenzyme A to a Ser of acyl-carrier-protein. In Thermotoga maritima (strain ATCC 43589 / DSM 3109 / JCM 10099 / NBRC 100826 / MSB8), this protein is Holo-[acyl-carrier-protein] synthase.